An 893-amino-acid polypeptide reads, in one-letter code: MNENGATPVAAARRHRPLPAERATSNSNETGLLINVIRSLTSSVSEDQREVEKSRLEKGYKESGALIDRLVKNHQQDVEKCLVSFRDVSSKISNCRERIHNVRNALHTVKSLLELRRDDLKKLWHENAQQKSVCEIMAKLEELREAPSKIENLISKEQYQQAADTVTESRELINGRLSRVEGLSHLSAEIERFTKILIDKINDTLVNMLVVEPFEKHLLHIVRTIPEHRINQNAYCHSLSTKSRSGSGSVSSFSDVSAKSRIVSSVEALSTLFRTVEERHWDVDRLMMLGKNMIDKMIVNTVQVMKIGANIDESNEGDTTHLKQLMQLLSAQFDSASQQHAEFGVLVEKQLGRKDVVTSFWRSAQSAIEVVVSEHLDINPLLEKQNVLGTASRKQLFRFENTACATPNANSSSHRTKAVICKPSAYNIKVIFPILSRLMETTEKNINDSPCELRRFMHSFVMEVFVERVKGELASRIEGALRGGEAVRVSTNKKILPSCEKVLNLCKEVQDLIVSIDLYADRFAALWLLVLTDYFKNMTDVYDRMTPKNPDPSLPNSEALPTRRQKISAAWTADDDISRLLMSLPNWHAASISPMTPAVESELDVGERNKRESEILIGNLGTQAQNSLSESDLITDMNDIKMFASLHESLRWFSDEIRELVHSLPANVKMMLDTCMVQVRLKDGQMIDNNSVPSAIEDCVRRLESIADSCLLLLHIEIRVHCFFHLAPLAKYRNTSSHNEVDPEVVALGKDLHQFHDNLKDVLSPAKLSYVFDGLGHLCASLFIHYSQFMPRLTEAAKKRVCRNVWGVQQRLSRITNRRESDLDRARAFFDLLLDNTPDGILAIVPEKRSQFTATELNYLLALSVRSDKTLASQPGALEKRQMVLNSILNQKK.

The disordered stretch occupies residues 1–27 (MNENGATPVAAARRHRPLPAERATSNS).

The protein belongs to the SEC8 family. The exocyst complex is composed of sec-3/exoc1, sec-5/exoc2, sec-6/exoc3, sec-8/exoc4, sec-10/exoc5, sec-15/exoc6, exo-70/exoc7 and exo-84/exoc8. In terms of tissue distribution, pseudocoelom.

Functionally, component of the exocyst complex involved in the docking of exocytic vesicles with fusion sites on the plasma membrane. The protein is Exocyst complex component 4 (sec-8) of Caenorhabditis elegans.